A 372-amino-acid chain; its full sequence is Geranylgeranyl pyrophosphate synthase 4 (372 aa).

An N-terminal signal peptide occupies residues 1–22 (MEAQNIFLYLLIVFLSLHFVFT). Residues lysine 121, arginine 124, and histidine 153 each contribute to the isopentenyl diphosphate site. The Mg(2+) site is built by aspartate 160 and aspartate 166. A dimethylallyl diphosphate-binding site is contributed by arginine 171. Arginine 172 provides a ligand contact to isopentenyl diphosphate. Lysine 257, threonine 258, glutamine 295, lysine 312, and lysine 322 together coordinate dimethylallyl diphosphate.

The protein belongs to the FPP/GGPP synthase family. In terms of assembly, monomer. Mg(2+) is required as a cofactor. In terms of tissue distribution, faintly expressed in flowers. Expressed in roots and siliques.

The protein localises to the endoplasmic reticulum. It catalyses the reaction isopentenyl diphosphate + dimethylallyl diphosphate = (2E)-geranyl diphosphate + diphosphate. It carries out the reaction isopentenyl diphosphate + (2E)-geranyl diphosphate = (2E,6E)-farnesyl diphosphate + diphosphate. The enzyme catalyses isopentenyl diphosphate + (2E,6E)-farnesyl diphosphate = (2E,6E,10E)-geranylgeranyl diphosphate + diphosphate. It functions in the pathway isoprenoid biosynthesis; farnesyl diphosphate biosynthesis; farnesyl diphosphate from geranyl diphosphate and isopentenyl diphosphate: step 1/1. The protein operates within isoprenoid biosynthesis; geranyl diphosphate biosynthesis; geranyl diphosphate from dimethylallyl diphosphate and isopentenyl diphosphate: step 1/1. Its pathway is isoprenoid biosynthesis; geranylgeranyl diphosphate biosynthesis; geranylgeranyl diphosphate from farnesyl diphosphate and isopentenyl diphosphate: step 1/1. Its function is as follows. Catalyzes the trans-addition of the three molecules of isopentenyl diphosphate (IPP) onto dimethylallyl diphosphate (DMAPP) to form geranylgeranyl diphosphate. This Arabidopsis thaliana (Mouse-ear cress) protein is Geranylgeranyl pyrophosphate synthase 4.